Reading from the N-terminus, the 174-residue chain is Keratin-associated protein 9-2 (174 aa).

17 consecutive repeat copies span residues 8–12, 13–17, 18–22, 37–41, 42–46, 51–55, 61–65, 66–70, 75–79, 80–84, 85–89, 90–94, 95–99, 144–148, 149–153, 154–158, and 168–172. A 17 X 5 AA repeats of C-C-[RQVSGE]-[SPTQ]-[TASP] region spans residues 8-172; sequence CCQPTCCRTT…TCVSSCCQPS (165 aa).

This sequence belongs to the KRTAP type 9 family. In terms of assembly, interacts with hair keratins.

In terms of biological role, in the hair cortex, hair keratin intermediate filaments are embedded in an interfilamentous matrix, consisting of hair keratin-associated proteins (KRTAP), which are essential for the formation of a rigid and resistant hair shaft through their extensive disulfide bond cross-linking with abundant cysteine residues of hair keratins. The matrix proteins include the high-sulfur and high-glycine-tyrosine keratins. This Homo sapiens (Human) protein is Keratin-associated protein 9-2 (KRTAP9-2).